Here is a 309-residue protein sequence, read N- to C-terminus: GTP cyclohydrolase MptA 2 (309 aa).

This sequence belongs to the GTP cyclohydrolase IV family. Homodimer. Fe(2+) is required as a cofactor.

It catalyses the reaction GTP + H2O = 7,8-dihydroneopterin 2',3'-cyclic phosphate + formate + diphosphate + H(+). The protein operates within cofactor biosynthesis; 5,6,7,8-tetrahydromethanopterin biosynthesis. In terms of biological role, converts GTP to 7,8-dihydro-D-neopterin 2',3'-cyclic phosphate, the first intermediate in the biosynthesis of coenzyme methanopterin. This chain is GTP cyclohydrolase MptA 2, found in Methanocella arvoryzae (strain DSM 22066 / NBRC 105507 / MRE50).